We begin with the raw amino-acid sequence, 510 residues long: NAD(P)H-quinone oxidoreductase subunit 2 A, chloroplastic (510 aa).

The next 13 helical transmembrane spans lie at 24 to 44 (LLLF…GLIL), 57 to 77 (TPWL…ALLF), 99 to 119 (IFQF…VEYI), 124 to 144 (MAIT…MFLC), 149 to 169 (LITI…LSGY), 183 to 203 (YLLM…WLYG), 229 to 249 (ISIA…PAPF), 295 to 315 (WHLL…LIAI), 323 to 343 (MLAY…IVGD), 354 to 374 (YMLF…LFGL), 395 to 415 (ALSS…AGFF), 418 to 438 (LYLF…IGLL), and 484 to 504 (MIVC…IIAI).

It belongs to the complex I subunit 2 family. In terms of assembly, NDH is composed of at least 16 different subunits, 5 of which are encoded in the nucleus.

It localises to the plastid. The protein localises to the chloroplast thylakoid membrane. The enzyme catalyses a plastoquinone + NADH + (n+1) H(+)(in) = a plastoquinol + NAD(+) + n H(+)(out). It carries out the reaction a plastoquinone + NADPH + (n+1) H(+)(in) = a plastoquinol + NADP(+) + n H(+)(out). Functionally, NDH shuttles electrons from NAD(P)H:plastoquinone, via FMN and iron-sulfur (Fe-S) centers, to quinones in the photosynthetic chain and possibly in a chloroplast respiratory chain. The immediate electron acceptor for the enzyme in this species is believed to be plastoquinone. Couples the redox reaction to proton translocation, and thus conserves the redox energy in a proton gradient. The chain is NAD(P)H-quinone oxidoreductase subunit 2 A, chloroplastic from Nuphar advena (Common spatterdock).